Consider the following 215-residue polypeptide: Probable phosphoglycerate mutase GpmB (215 aa).

Substrate is bound by residues 8–15, 21–22, R58, K60, 82–85, 104–105, and 151–152; these read RHGETQWN, QG, ELDM, RR, and GI. H9 acts as the Tele-phosphohistidine intermediate in catalysis. E82 serves as the catalytic Proton donor/acceptor.

Belongs to the phosphoglycerate mutase family. GpmB subfamily.

It carries out the reaction (2R)-2-phosphoglycerate = (2R)-3-phosphoglycerate. It participates in carbohydrate degradation; glycolysis; pyruvate from D-glyceraldehyde 3-phosphate: step 3/5. The protein is Probable phosphoglycerate mutase GpmB of Salmonella paratyphi A (strain AKU_12601).